A 388-amino-acid chain; its full sequence is Succinate--CoA ligase [ADP-forming] subunit beta (388 aa).

Residues 9-244 (KEILRKFGVA…PDEEDPKETQ (236 aa)) enclose the ATP-grasp domain. ATP-binding positions include K46, 53-55 (GRG), E99, C102, and E107. Positions 199 and 213 each coordinate Mg(2+). Residues N264 and 321–323 (GIM) each bind substrate.

The protein belongs to the succinate/malate CoA ligase beta subunit family. Heterotetramer of two alpha and two beta subunits. It depends on Mg(2+) as a cofactor.

The enzyme catalyses succinate + ATP + CoA = succinyl-CoA + ADP + phosphate. It catalyses the reaction GTP + succinate + CoA = succinyl-CoA + GDP + phosphate. It participates in carbohydrate metabolism; tricarboxylic acid cycle; succinate from succinyl-CoA (ligase route): step 1/1. Succinyl-CoA synthetase functions in the citric acid cycle (TCA), coupling the hydrolysis of succinyl-CoA to the synthesis of either ATP or GTP and thus represents the only step of substrate-level phosphorylation in the TCA. The beta subunit provides nucleotide specificity of the enzyme and binds the substrate succinate, while the binding sites for coenzyme A and phosphate are found in the alpha subunit. This is Succinate--CoA ligase [ADP-forming] subunit beta from Anaeromyxobacter dehalogenans (strain 2CP-C).